The primary structure comprises 655 residues: MERKVLALQARKKRTKAKKDKAQRKSETQHRGSAPHSESDLPEQEEEILGSDDDEQEDPNDYCKGGYHLVKIGDLFNGRYHVIRKLGWGHFSTVWLSWDIQGKKFVAMKVVKSAEHYTETALDEIRLLKSVRNSDPNDPNREMVVQLLDDFKISGVNGTHICMVFEVLGHHLLKWIIKSNYQGLPLPCVKKIIQQVLQGLDYLHTKCRIIHTDIKPENILLSVNEQYIRRLAAEATEWQRSGAPPPSGSAVSTAPQPKPADKMSKNKKKKLKKKQKRQAELLEKRMQEIEEMEKESGPGQKRPNKQEESESPVERPLKENPPNKMTQEKLEESSTIGQDQTLMERDTEGGAAEINCNGVIEVINYTQNSNNETLRHKEDLHNANDCDVQNLNQESSFLSSQNGDSSTSQETDSCTPITSEVSDTMVCQSSSTVGQSFSEQHISQLQESIRAEIPCEDEQEQEHNGPLDNKGKSTAGNFLVNPLEPKNAEKLKVKIADLGNACWVHKHFTEDIQTRQYRSLEVLIGSGYNTPADIWSTACMAFELATGDYLFEPHSGEEYTRDEDHIALIIELLGKVPRKLIVAGKYSKEFFTKKGDLKHITKLKPWGLFEVLVEKYEWSQEEAAGFTDFLLPMLELIPEKRATAAECLRHPWLNS.

The tract at residues 1 to 57 is disordered; the sequence is MERKVLALQARKKRTKAKKDKAQRKSETQHRGSAPHSESDLPEQEEEILGSDDDEQE. Residues 10–22 show a composition bias toward basic residues; sequence ARKKRTKAKKDKA. The segment covering 40–57 has biased composition (acidic residues); the sequence is DLPEQEEEILGSDDDEQE. Phosphoserine; by CK2 is present on serine 51. Residues 80 to 653 form the Protein kinase domain; that stretch reads YHVIRKLGWG…AAECLRHPWL (574 aa). ATP is bound by residues 86 to 94, lysine 109, and 166 to 168; these read LGWGHFSTV and EVL. The Proton acceptor role is filled by aspartate 213. 2 disordered regions span residues 238–341 and 397–417; these read WQRS…QDQT and FLSS…CTPI. The span at 265-276 shows a compositional bias: basic residues; it reads KNKKKKLKKKQK. 2 stretches are compositionally biased toward basic and acidic residues: residues 277–288 and 304–318; these read RQAELLEKRMQE and NKQE…RPLK. A phosphoserine mark is found at serine 309, serine 311, and serine 333. Residue serine 555 is modified to Phosphoserine; by CK2.

It belongs to the protein kinase superfamily. CMGC Ser/Thr protein kinase family. As to quaternary structure, monomer. Isoform 2 is found in a multisubunit complex containing seven proteins, named toposome, which separates entangled circular chromatin DNA during chromosome segregation. Isoform 2 interacts with DNAJC8 and AHSA1/AHA1 and this mediates formation of a complex with the Hsp70 /Hsp90 machinery. Isoform 1 is found in a complex with: DHX9, MOV10, MATR3, HNRNPU, NCL, DDX21, HSD17B4, PABPC1, HNRNPM, IGF2BP1, SYNCRIP, RPL3, VIM, YBX1, NPM1, HNRNPA2B1, HNRNPC, RPLP0, RPL7A and RALY. Isoform 2 binds to IGF2BP1, SYNCRIP, HNRNPA2B1 and HNRNPC. Isoform 1 and isoform 2 interact with SAFB which inhibits its activity. Isoform 2 interacts with SAFB2 which inhibits its activity. (Microbial infection) Isoform 2 interacts with HHV-1 ICP27 protein. It depends on Mg(2+) as a cofactor. As to expression, isoform 2 is predominantly expressed in the testis but is also present at lower levels in heart, ovary, small intestine, liver, kidney, pancreas and skeletal muscle. Isoform 1 is only seen in the testis, at lower levels than isoform 2. Highly expressed in different erythroid and lymphoid cell lines, with isoform 2 being far more abundant than isoform 1.

Its subcellular location is the cytoplasm. It is found in the nucleus. It localises to the nucleus matrix. The protein resides in the microsome. The protein localises to the nucleoplasm. Its subcellular location is the nucleus speckle. It is found in the chromosome. It catalyses the reaction L-seryl-[protein] + ATP = O-phospho-L-seryl-[protein] + ADP + H(+). The catalysed reaction is L-threonyl-[protein] + ATP = O-phospho-L-threonyl-[protein] + ADP + H(+). Activated by phosphorylation on Ser-51 and Ser-555. Functionally, serine/arginine-rich protein-specific kinase which specifically phosphorylates its substrates at serine residues located in regions rich in arginine/serine dipeptides, known as RS domains and is involved in the phosphorylation of SR splicing factors and the regulation of splicing. Plays a central role in the regulatory network for splicing, controlling the intranuclear distribution of splicing factors in interphase cells and the reorganization of nuclear speckles during mitosis. Can influence additional steps of mRNA maturation, as well as other cellular activities, such as chromatin reorganization in somatic and sperm cells and cell cycle progression. Isoform 2 phosphorylates SFRS2, ZRSR2, LBR and PRM1. Isoform 2 phosphorylates SRSF1 using a directional (C-terminal to N-terminal) and a dual-track mechanism incorporating both processive phosphorylation (in which the kinase stays attached to the substrate after each round of phosphorylation) and distributive phosphorylation steps (in which the kinase and substrate dissociate after each phosphorylation event). The RS domain of SRSF1 binds first to a docking groove in the large lobe of the kinase domain of SRPK1. This induces certain structural changes in SRPK1 and/or RRM2 domain of SRSF1, allowing RRM2 to bind the kinase and initiate phosphorylation. The cycles continue for several phosphorylation steps in a processive manner (steps 1-8) until the last few phosphorylation steps (approximately steps 9-12). During that time, a mechanical stress induces the unfolding of the beta-4 motif in RRM2, which then docks at the docking groove of SRPK1. This also signals RRM2 to begin to dissociate, which facilitates SRSF1 dissociation after phosphorylation is completed. Isoform 2 can mediate hepatitis B virus (HBV) core protein phosphorylation. It plays a negative role in the regulation of HBV replication through a mechanism not involving the phosphorylation of the core protein but by reducing the packaging efficiency of the pregenomic RNA (pgRNA) without affecting the formation of the viral core particles. Isoform 1 and isoform 2 can induce splicing of exon 10 in MAPT/TAU. The ratio of isoform 1/isoform 2 plays a decisive role in determining cell fate in K-562 leukaemic cell line: isoform 2 favors proliferation where as isoform 1 favors differentiation. In Homo sapiens (Human), this protein is SRSF protein kinase 1.